A 534-amino-acid chain; its full sequence is Beta-glucosidase 31 (534 aa).

A signal peptide spans 1 to 22; it reads MAIKLIALVITLCVASWDVAQG. Gln-51 contacts a beta-D-glucoside. Asn-68 is a glycosylation site (N-linked (GlcNAc...) asparagine). Residues His-154 and 199 to 200 each bind a beta-D-glucoside; that span reads NE. Catalysis depends on Glu-200, which acts as the Proton donor. An intrachain disulfide couples Cys-219 to Cys-227. An a beta-D-glucoside-binding site is contributed by Tyr-344. N-linked (GlcNAc...) asparagine glycosylation occurs at Asn-374. Glu-417 serves as a coordination point for a beta-D-glucoside. Glu-417 functions as the Nucleophile in the catalytic mechanism. A glycan (N-linked (GlcNAc...) asparagine) is linked at Asn-425. A beta-D-glucoside contacts are provided by residues Trp-467, 474–475, and Phe-483; that span reads EW.

Belongs to the glycosyl hydrolase 1 family.

It carries out the reaction Hydrolysis of terminal, non-reducing beta-D-glucosyl residues with release of beta-D-glucose.. The polypeptide is Beta-glucosidase 31 (Arabidopsis thaliana (Mouse-ear cress)).